Here is a 210-residue protein sequence, read N- to C-terminus: Cancer/testis antigen 2 (210 aa).

2 stretches are compositionally biased toward gly residues: residues 1–47 (MQAE…GPRG) and 56–66 (PRGGAPRGPHG). Disordered stretches follow at residues 1–80 (MQAE…PCGA) and 154–197 (GLGS…DGCR). Residues 163–177 (QKARDLRTPKHKVSE) are compositionally biased toward basic and acidic residues.

It belongs to the CTAG/PCC1 family. In terms of tissue distribution, testis and very low level in placenta and in some uterus samples. Observed in 25-50% of tumor samples of melanomas, non-small-cell lung carcinomas, bladder, prostate and head and neck cancers.

This chain is Cancer/testis antigen 2 (CTAG2), found in Homo sapiens (Human).